A 328-amino-acid polypeptide reads, in one-letter code: UDP-N-acetylglucosamine transporter YEA4 (328 aa).

10 helical membrane passes run 1–21, 30–50, 66–86, 98–118, 122–142, 166–186, 198–218, 241–261, 274–294, and 298–318; these read MSFV…VISF, INLG…IQLP, HIPL…SVAN, IHII…WAVC, YSKL…VASL, SMFG…LSLL, WKET…LGYT, LPIA…FICI, LTLS…SVYI, and VLSV…GLYS.

The protein belongs to the nucleotide-sugar transporter family. SLC35A subfamily.

The protein localises to the golgi apparatus membrane. Its function is as follows. Sugar transporter that specifically mediates the transport of UDP-N-acetylglucosamine (UDP-GlcNAc) from the cytosol into Golgi vesicles where glycosyltransferases function. This is UDP-N-acetylglucosamine transporter YEA4 (YEA4) from Kluyveromyces lactis (strain ATCC 8585 / CBS 2359 / DSM 70799 / NBRC 1267 / NRRL Y-1140 / WM37) (Yeast).